Here is a 638-residue protein sequence, read N- to C-terminus: LIM domain kinase 2 (638 aa).

LIM zinc-binding domains are found at residues 12-63 and 72-124; these read CPGC…CPKD and CHGC…CGKC. Residues 152 to 239 form the PDZ domain; sequence LISMPATTEG…TLQLLIEHDP (88 aa). At T210 the chain carries Phosphothreonine. Residues 279–304 form a disordered region; it reads LRRRSLRRSNSISKSPGPSSPKEPLL. Residues 286–302 are compositionally biased toward low complexity; the sequence is RSNSISKSPGPSSPKEP. Residues S293 and S298 each carry the phosphoserine modification. Positions 331–608 constitute a Protein kinase domain; sequence LIHGEVLGKG…DSFEALSLYL (278 aa). Residues 337 to 345 and K360 each bind ATP; that span reads LGKGFFGQA. D451 is a catalytic residue. Position 505 is a phosphothreonine; by ROCK1 and CDC42BP (T505).

The protein belongs to the protein kinase superfamily. TKL Ser/Thr protein kinase family. Interacts with LIMK2b. In terms of assembly, interacts with LIMK2a. As to quaternary structure, binds ROCK1 and MARF1. Interacts with NISCH. Phosphorylated on serine and/or threonine residues by ROCK1.

The protein resides in the cytoplasm. The protein localises to the cytoskeleton. It is found in the spindle. It localises to the microtubule organizing center. Its subcellular location is the centrosome. The protein resides in the nucleus. The protein localises to the perinuclear region. It carries out the reaction L-seryl-[protein] + ATP = O-phospho-L-seryl-[protein] + ADP + H(+). The enzyme catalyses L-threonyl-[protein] + ATP = O-phospho-L-threonyl-[protein] + ADP + H(+). Serine/threonine-protein kinase that plays an essential role in the regulation of actin filament dynamics. Acts downstream of several Rho family GTPase signal transduction pathways. Involved in astral microtubule organization and mitotic spindle orientation during early stages of mitosis by mediating phosphorylation of TPPP. Displays serine/threonine-specific phosphorylation of myelin basic protein and histone (MBP) in vitro. Suppresses ciliogenesis via multiple pathways; phosphorylation of CFL1, suppression of directional trafficking of ciliary vesicles to the ciliary base, and by facilitating YAP1 nuclear localization where it acts as a transcriptional corepressor of the TEAD4 target genes AURKA and PLK1. The sequence is that of LIM domain kinase 2 (LIMK2) from Homo sapiens (Human).